Reading from the N-terminus, the 336-residue chain is Fructose-1,6-bisphosphatase class 1 (336 aa).

Glu92, Asp115, Leu117, and Asp118 together coordinate Mg(2+). Substrate contacts are provided by residues 118-121, Asn211, Tyr244, 262-264, and Lys274; these read DGSS and YLY. Glu280 is a Mg(2+) binding site.

Belongs to the FBPase class 1 family. As to quaternary structure, homotetramer. The cofactor is Mg(2+).

It localises to the cytoplasm. The enzyme catalyses beta-D-fructose 1,6-bisphosphate + H2O = beta-D-fructose 6-phosphate + phosphate. It functions in the pathway carbohydrate biosynthesis; gluconeogenesis. The sequence is that of Fructose-1,6-bisphosphatase class 1 from Aliivibrio salmonicida (strain LFI1238) (Vibrio salmonicida (strain LFI1238)).